The chain runs to 317 residues: Melanocyte-stimulating hormone receptor (317 aa).

The Extracellular portion of the chain corresponds to 1-37 (MPMQGAQRRLLGSLNSTPTATPNLGLAANHTGAPCLE). An N-linked (GlcNAc...) asparagine glycan is attached at N29. A helical membrane pass occupies residues 38-63 (VSIPDGLFLSLGLVSLVENVLVVAAI). The Cytoplasmic portion of the chain corresponds to 64–72 (AKNRNLHSP). A helical membrane pass occupies residues 73–93 (MYCFICCLALSDLLVSGSNML). Residues 94–118 (EMAVILLLEAGALATRASVVQQLQN) are Extracellular-facing. Residues 119–140 (TIDVLTCSSMLCSLCFLGAIAV) form a helical membrane-spanning segment. Over 141-163 (DRYVSIFYALRYHSIVTLPRARR) the chain is Cytoplasmic. Residues 164–183 (AIAAIWVASVLSSTLFIAYC) traverse the membrane as a helical segment. At 184–191 (DHAAVLLC) the chain is on the extracellular side. A helical transmembrane segment spans residues 192–211 (LVVFFLAMLVLMAVLYVHML). Over 212 to 240 (ARACQHAQGITRLHKRQLPAHQGFGLRGA) the chain is Cytoplasmic. Residues 241–266 (ATLTILLGIFFVCWGPFFLHLMLVVL) traverse the membrane as a helical segment. Over 267 to 279 (CPQHLTCSCIFKN) the chain is Extracellular. Residues 280–300 (FKVFLTLIICNTIIDPLIYAF) traverse the membrane as a helical segment. The Cytoplasmic segment spans residues 301-317 (RSQELCRTLKEVLLCSW). C315 carries the S-palmitoyl cysteine lipid modification.

This sequence belongs to the G-protein coupled receptor 1 family. As to quaternary structure, interacts with MGRN1, but does not undergo MGRN1-mediated ubiquitination; this interaction competes with GNAS-binding and thus inhibits agonist-induced cAMP production. Interacts with OPN3; the interaction results in a decrease in MC1R-mediated cAMP signaling and ultimately a decrease in melanin production in melanocytes.

Its subcellular location is the cell membrane. In terms of biological role, receptor for MSH (alpha, beta and gamma) and ACTH. The activity of this receptor is mediated by G proteins which activate adenylate cyclase. Mediates melanogenesis, the production of eumelanin (black/brown) and phaeomelanin (red/yellow), via regulation of cAMP signaling in melanocytes. The chain is Melanocyte-stimulating hormone receptor (MC1R) from Alouatta sara (Bolivian red howler monkey).